We begin with the raw amino-acid sequence, 317 residues long: NAD kinase (317 aa).

The active-site Proton acceptor is the Asp82. NAD(+) contacts are provided by residues Asp82–Gly83, Arg87, Asn157–Glu158, Asp187, and Thr198–Ser203.

This sequence belongs to the NAD kinase family. The cofactor is a divalent metal cation.

Its subcellular location is the cytoplasm. The enzyme catalyses NAD(+) + ATP = ADP + NADP(+) + H(+). Involved in the regulation of the intracellular balance of NAD and NADP, and is a key enzyme in the biosynthesis of NADP. Catalyzes specifically the phosphorylation on 2'-hydroxyl of the adenosine moiety of NAD to yield NADP. The chain is NAD kinase from Corynebacterium diphtheriae (strain ATCC 700971 / NCTC 13129 / Biotype gravis).